The chain runs to 350 residues: NADH-cytochrome b5 reductase 2 (350 aa).

A helical membrane pass occupies residues 43–63 (PLVLALGGVAGIGAWYGLGGF). The region spanning 96 to 204 (DQFVEFTLKE…KGPIAKFAYK (109 aa)) is the FAD-binding FR-type domain. 207–242 (EFESIGMIAGGSGITPMYQVIQDIASNPSDKTKVTL) provides a ligand contact to FAD.

It belongs to the flavoprotein pyridine nucleotide cytochrome reductase family. Requires FAD as cofactor.

It is found in the mitochondrion outer membrane. The enzyme catalyses 2 Fe(III)-[cytochrome b5] + NADH = 2 Fe(II)-[cytochrome b5] + NAD(+) + H(+). Its function is as follows. May mediate the reduction of outer membrane cytochrome b5. In Mycosarcoma maydis (Corn smut fungus), this protein is NADH-cytochrome b5 reductase 2 (MCR1).